Here is a 217-residue protein sequence, read N- to C-terminus: Probable GTP-binding protein EngB (217 aa).

Positions 37–214 (DGVEIAFAGR…RAAMAKLLEE (178 aa)) constitute an EngB-type G domain. GTP-binding positions include 45–52 (GRSNVGKS), 72–76 (GRTQE), 92–95 (DMPG), 159–162 (TKAD), and 193–195 (TSS). Residues serine 52 and threonine 74 each coordinate Mg(2+).

Belongs to the TRAFAC class TrmE-Era-EngA-EngB-Septin-like GTPase superfamily. EngB GTPase family. Requires Mg(2+) as cofactor.

In terms of biological role, necessary for normal cell division and for the maintenance of normal septation. The chain is Probable GTP-binding protein EngB from Bradyrhizobium diazoefficiens (strain JCM 10833 / BCRC 13528 / IAM 13628 / NBRC 14792 / USDA 110).